Consider the following 252-residue polypeptide: Transcriptional regulatory protein HptR (252 aa).

Residues 3 to 118 form the Response regulatory domain; sequence KVVICDDERI…QLEVILGRLV (116 aa). A 4-aspartylphosphate modification is found at D55. Positions 153–250 constitute an HTH araC/xylS-type domain; the sequence is NQIVDQIKQS…QMSPSDYCKQ (98 aa). DNA-binding regions (H-T-H motif) lie at residues 170–191 and 217–240; these read SDLI…KDHV and HYEI…KKYL.

Phosphorylated by HptS.

The protein resides in the cytoplasm. Member of the two-component regulatory system HptS/HptR that regulates genes involved in hexose phosphate transport system in response to changes in extracellular phosphate sources. Activates uhpT expression to facilitate glucose-6-phosphate/G6P utilization by directly binding to its promoter. Antagonizes CcpA-dependent transcription of a subset of CcpA-regulated genes involved in antibiotic susceptibility. The polypeptide is Transcriptional regulatory protein HptR (hptR) (Staphylococcus aureus (strain NCTC 8325 / PS 47)).